The primary structure comprises 278 residues: MHELLLFASVPAHQHHELLQQLAGLTAMQPQHRFERRLIFKAYRKPGLVNVRVGASQDVQGAEMQRLNKMLNGGMFYTQVVGPVAAADFGAPAPTVSVGDQDAQMSGMGVGVSAGVDEKPSTRPHRYDYDDQPWKLEFRDIPEAGTRSAVTARLMASASLPRGDIMVPMNAWGYNFVTEYAVEGDIFILHDIVIFLHRVLHYPTESQEPRRQLPALPEMTPLERSGSYVLQAAITVQDGASQETMKIASQHLFGLREQLKSAVRLEMADRLSLDTRAK.

The protein belongs to the Mediator complex subunit 18 family. Component of the Mediator complex.

It is found in the nucleus. Component of the Mediator complex, a coactivator involved in the regulated transcription of nearly all RNA polymerase II-dependent genes. Mediator functions as a bridge to convey information from gene-specific regulatory proteins to the basal RNA polymerase II transcription machinery. Mediator is recruited to promoters by direct interactions with regulatory proteins and serves as a scaffold for the assembly of a functional preinitiation complex with RNA polymerase II and the general transcription factors. The protein is Mediator of RNA polymerase II transcription subunit 18 (srb5) of Aspergillus clavatus (strain ATCC 1007 / CBS 513.65 / DSM 816 / NCTC 3887 / NRRL 1 / QM 1276 / 107).